A 380-amino-acid chain; its full sequence is Cytochrome b (380 aa).

Transmembrane regions (helical) follow at residues 34–54 (FGSLLGICLMTQILTGLLLAM), 78–99 (WLIRNLHANGASFFFICIYLHI), 114–134 (WNTGIILLLTLMATAFVGYVL), and 179–199 (FFALHFLLPFAIAGLTLIHLT). Heme b contacts are provided by H84 and H98. Heme b contacts are provided by H183 and H197. H202 is an a ubiquinone binding site. The next 4 membrane-spanning stretches (helical) occupy residues 227-247 (LKDILGFTLMVLPLTSLALFS), 289-309 (LGGVLALAASVLVLFLSPFLH), 321-341 (LSQLLFWILVTNLFILTWVGS), and 348-368 (FIIIGQLASITYFTILLILFP).

This sequence belongs to the cytochrome b family. In terms of assembly, the cytochrome bc1 complex contains 11 subunits: 3 respiratory subunits (MT-CYB, CYC1 and UQCRFS1), 2 core proteins (UQCRC1 and UQCRC2) and 6 low-molecular weight proteins (UQCRH/QCR6, UQCRB/QCR7, UQCRQ/QCR8, UQCR10/QCR9, UQCR11/QCR10 and a cleavage product of UQCRFS1). This cytochrome bc1 complex then forms a dimer. The cofactor is heme b.

The protein resides in the mitochondrion inner membrane. Component of the ubiquinol-cytochrome c reductase complex (complex III or cytochrome b-c1 complex) that is part of the mitochondrial respiratory chain. The b-c1 complex mediates electron transfer from ubiquinol to cytochrome c. Contributes to the generation of a proton gradient across the mitochondrial membrane that is then used for ATP synthesis. In Macronectes halli (Hall's giant petrel), this protein is Cytochrome b (MT-CYB).